The sequence spans 1155 residues: Eukaryotic translation initiation factor 3 subunit A (1155 aa).

A PCI domain is found at 319 to 502 (LQRMAAHVLL…NSIYFGTDLT (184 aa)). 2 disordered regions span residues 589–613 (QNNA…LAEQ) and 836–1155 (AAEA…VKRR). Basic and acidic residues-rich tracts occupy residues 836 to 900 (AAEA…RGGD), 925 to 987 (DRNE…EPDS), 1004 to 1057 (SRDD…DAAP), and 1066 to 1101 (DAPR…RAPK). A compositionally biased stretch (gly residues) spans 1104–1118 (GPSGGTGTAASGGGN). A compositionally biased stretch (basic and acidic residues) spans 1125-1145 (PRDEPAPKRDQPQDKENKAVD).

It belongs to the eIF-3 subunit A family. Component of the eukaryotic translation initiation factor 3 (eIF-3) complex. The eIF-3 complex interacts with pix.

It localises to the cytoplasm. RNA-binding component of the eukaryotic translation initiation factor 3 (eIF-3) complex, which is involved in protein synthesis of a specialized repertoire of mRNAs and, together with other initiation factors, stimulates binding of mRNA and methionyl-tRNAi to the 40S ribosome. The eIF-3 complex specifically targets and initiates translation of a subset of mRNAs involved in cell proliferation. The chain is Eukaryotic translation initiation factor 3 subunit A from Drosophila pseudoobscura pseudoobscura (Fruit fly).